Reading from the N-terminus, the 141-residue chain is Nucleoside diphosphate kinase (141 aa).

ATP contacts are provided by Lys-11, Phe-59, Arg-87, Thr-93, Arg-104, and Asn-114. His-117 functions as the Pros-phosphohistidine intermediate in the catalytic mechanism.

The protein belongs to the NDK family. As to quaternary structure, homotetramer. Mg(2+) serves as cofactor.

The protein localises to the cytoplasm. It catalyses the reaction a 2'-deoxyribonucleoside 5'-diphosphate + ATP = a 2'-deoxyribonucleoside 5'-triphosphate + ADP. The catalysed reaction is a ribonucleoside 5'-diphosphate + ATP = a ribonucleoside 5'-triphosphate + ADP. In terms of biological role, major role in the synthesis of nucleoside triphosphates other than ATP. The ATP gamma phosphate is transferred to the NDP beta phosphate via a ping-pong mechanism, using a phosphorylated active-site intermediate. The chain is Nucleoside diphosphate kinase from Legionella pneumophila (strain Lens).